The primary structure comprises 468 residues: 23S rRNA (uracil(1939)-C(5))-methyltransferase RlmD (468 aa).

In terms of domain architecture, TRAM spans 12-70 (SKQLSPKLSLNVTQLDHLGAGMAQHQGKVVFIPQALPGERVSVQLTDQKKSFAKAKLIK). [4Fe-4S] cluster contacts are provided by Cys83, Cys89, Cys92, and Cys174. The S-adenosyl-L-methionine site is built by Gln296, Phe325, Asn330, Glu351, Asp378, and Asp398. Cys424 functions as the Nucleophile in the catalytic mechanism.

The protein belongs to the class I-like SAM-binding methyltransferase superfamily. RNA M5U methyltransferase family. RlmD subfamily.

It carries out the reaction uridine(1939) in 23S rRNA + S-adenosyl-L-methionine = 5-methyluridine(1939) in 23S rRNA + S-adenosyl-L-homocysteine + H(+). Functionally, catalyzes the formation of 5-methyl-uridine at position 1939 (m5U1939) in 23S rRNA. This chain is 23S rRNA (uracil(1939)-C(5))-methyltransferase RlmD, found in Shewanella denitrificans (strain OS217 / ATCC BAA-1090 / DSM 15013).